Here is a 319-residue protein sequence, read N- to C-terminus: tRNA pseudouridine synthase B (319 aa).

Asp-49 functions as the Nucleophile in the catalytic mechanism.

Belongs to the pseudouridine synthase TruB family. Type 1 subfamily.

It catalyses the reaction uridine(55) in tRNA = pseudouridine(55) in tRNA. Its function is as follows. Responsible for synthesis of pseudouridine from uracil-55 in the psi GC loop of transfer RNAs. The chain is tRNA pseudouridine synthase B from Bartonella henselae (strain ATCC 49882 / DSM 28221 / CCUG 30454 / Houston 1) (Rochalimaea henselae).